The following is a 414-amino-acid chain: Tryptophan synthase beta chain (414 aa).

Lys-108 bears the N6-(pyridoxal phosphate)lysine mark.

It belongs to the TrpB family. Tetramer of two alpha and two beta chains. The cofactor is pyridoxal 5'-phosphate.

It catalyses the reaction (1S,2R)-1-C-(indol-3-yl)glycerol 3-phosphate + L-serine = D-glyceraldehyde 3-phosphate + L-tryptophan + H2O. It functions in the pathway amino-acid biosynthesis; L-tryptophan biosynthesis; L-tryptophan from chorismate: step 5/5. In terms of biological role, the beta subunit is responsible for the synthesis of L-tryptophan from indole and L-serine. The protein is Tryptophan synthase beta chain of Beijerinckia indica subsp. indica (strain ATCC 9039 / DSM 1715 / NCIMB 8712).